The chain runs to 340 residues: tRNA N6-adenosine threonylcarbamoyltransferase (340 aa).

2 residues coordinate Fe cation: His-115 and His-119. Substrate is bound by residues 138–142 (VVSGG), Asp-171, Gly-184, Asp-188, and Asn-278. Position 306 (Asp-306) interacts with Fe cation.

The protein belongs to the KAE1 / TsaD family. The cofactor is Fe(2+).

The protein resides in the cytoplasm. It carries out the reaction L-threonylcarbamoyladenylate + adenosine(37) in tRNA = N(6)-L-threonylcarbamoyladenosine(37) in tRNA + AMP + H(+). Functionally, required for the formation of a threonylcarbamoyl group on adenosine at position 37 (t(6)A37) in tRNAs that read codons beginning with adenine. Is involved in the transfer of the threonylcarbamoyl moiety of threonylcarbamoyl-AMP (TC-AMP) to the N6 group of A37, together with TsaE and TsaB. TsaD likely plays a direct catalytic role in this reaction. The polypeptide is tRNA N6-adenosine threonylcarbamoyltransferase (Clostridium botulinum (strain 657 / Type Ba4)).